Here is a 101-residue protein sequence, read N- to C-terminus: Protein S100-A4 (101 aa).

N6-acetyllysine is present on K7. 2 EF-hand domains span residues 12 to 47 (MVSTFHKYSGKEGDKFKLNRSELKELLMRELPSFLG) and 50 to 85 (TDEAAFQKLMSNLDSNRDNEVDFQEYCVFLSCVAMM). Ca(2+) contacts are provided by K28 and E33. The residue at position 35 (K35) is an N6-acetyllysine. Ca(2+)-binding residues include D63, N65, D67, E69, and E74.

Belongs to the S-100 family. Homodimer. Interacts with PPFIBP1 in a calcium-dependent mode. Interacts with PGLYRP1; this complex acts as a chemoattractant that promotes lymphocyte movement. Interacts with MYH9; this interaction increases cell motility. Interacts with Annexin 2/ANXA2. Interacts with TP53; this interaction promotes TP53 degradation. Interacts with CCR5 and CXCR3. Interacts with FCGR3A; this interaction inhibits PKC-dependent phosphorylation of FCGR3A.

Its subcellular location is the secreted. It localises to the nucleus. The protein localises to the cytoplasm. Functionally, calcium-binding protein that plays a role in various cellular processes including motility, angiogenesis, cell differentiation, apoptosis, and autophagy. Increases cell motility and invasiveness by interacting with non-muscle myosin heavy chain (NMMHC) IIA/MYH9. Mechanistically, promotes filament depolymerization and increases the amount of soluble myosin-IIA, resulting in the formation of stable protrusions facilitating chemotaxis. Also modulates the pro-apoptotic function of TP53 by binding to its C-terminal transactivation domain within the nucleus and reducing its protein levels. Within the extracellular space, stimulates cytokine production including granulocyte colony-stimulating factor and CCL24 from T-lymphocytes. In addition, stimulates T-lymphocyte chemotaxis by acting as a chemoattractant complex with PGLYRP1 that promotes lymphocyte migration via CCR5 and CXCR3 receptors. The protein is Protein S100-A4 (S100A4) of Canis lupus familiaris (Dog).